Consider the following 321-residue polypeptide: D-alanine--D-alanine ligase (321 aa).

In terms of domain architecture, ATP-grasp spans 121-315 (RSWFLTNNIN…FVNLIEEILK (195 aa)). 148–199 (IKRPYVIKPFTQGSSIGVEVIFEEDDFNFANYDFPYGDEVIIEKYIKGRELQ) provides a ligand contact to ATP. Mg(2+) contacts are provided by E268, E282, and N284.

The protein belongs to the D-alanine--D-alanine ligase family. It depends on Mg(2+) as a cofactor. The cofactor is Mn(2+).

The protein localises to the cytoplasm. The enzyme catalyses 2 D-alanine + ATP = D-alanyl-D-alanine + ADP + phosphate + H(+). The protein operates within cell wall biogenesis; peptidoglycan biosynthesis. In terms of biological role, cell wall formation. In Rickettsia bellii (strain RML369-C), this protein is D-alanine--D-alanine ligase.